Reading from the N-terminus, the 410-residue chain is Neuroserpin (410 aa).

The signal sequence occupies residues 1–16 (MAFLGLFSLLVLQSMA). 3 N-linked (GlcNAc...) asparagine glycosylation sites follow: asparagine 157, asparagine 321, and asparagine 401. Residue serine 403 is glycosylated (O-linked (Xyl...) (chondroitin sulfate) serine).

The protein belongs to the serpin family. In terms of assembly, monomer. Has a tendency to form large polymers already at 41 and 45 degrees Celsius (in vitro). In terms of tissue distribution, detected in brain cortex and hippocampus pyramidal neurons (at protein level). Detected in cerebrospinal fluid (at protein level). Predominantly expressed in the brain.

The protein localises to the secreted. Its subcellular location is the cytoplasmic vesicle. It localises to the secretory vesicle lumen. It is found in the perikaryon. Serine protease inhibitor that inhibits plasminogen activators and plasmin but not thrombin. May be involved in the formation or reorganization of synaptic connections as well as for synaptic plasticity in the adult nervous system. May protect neurons from cell damage by tissue-type plasminogen activator. The chain is Neuroserpin (SERPINI1) from Homo sapiens (Human).